The chain runs to 242 residues: Cysteine desulfuration protein SufE (242 aa).

Residue Cys148 is the Cysteine persulfide intermediate of the active site.

It belongs to the SufE family. Monomer. Interacts with SufS; interaction enhances cysteine desulfurase activity of SufS.

It is found in the plastid. The protein resides in the apicoplast. It functions in the pathway cofactor biosynthesis; iron-sulfur cluster biosynthesis. In terms of biological role, participates in sulfur mobilization (SUF) pathway for iron-sulfur (Fe-S) cluster biogenesis. Enhances cysteine desulfurase activity of SufS. Probably functions as a sulfur acceptor for SufS. The polypeptide is Cysteine desulfuration protein SufE (Plasmodium vivax).